A 2406-amino-acid polypeptide reads, in one-letter code: Highly reducing polyketide synthase dmxL2 (2406 aa).

A Ketosynthase family 3 (KS3) domain is found at 1-399; that stretch reads MEAFWSASKK…GTNAHAVLDD (399 aa). Cysteine 130 is an active-site residue. Cysteine 130 serves as the catalytic For beta-ketoacyl synthase activity. Residues 414–476 form a disordered region; the sequence is GHASNGTNGT…GPTDGPTSRP (63 aa). Residues 417–448 show a composition bias toward polar residues; that stretch reads SNGTNGTLTNGHILNGEHTSNGMNGTLTNGHA. The tract at residues 574–911 is malonyl-CoA:ACP transacylase (MAT) domain; sequence FVFTGQGAQW…LAGSLFTQGY (338 aa). Serine 665 serves as the catalytic For malonyltransferase activity. The N-terminal hotdog fold stretch occupies residues 962-1096; the sequence is PSLLGSPSPS…GLLVIEYEAA (135 aa). Positions 962–1278 constitute a PKS/mFAS DH domain; it reads PSLLGSPSPS…CAEIAGASSN (317 aa). The tract at residues 964–1273 is dehydratase (DH) domain; it reads LLGSPSPSLA…IEGFLCAEIA (310 aa). Histidine 994 acts as the Proton acceptor; for dehydratase activity in catalysis. The tract at residues 1124-1278 is C-terminal hotdog fold; the sequence is VHRLDPSGFY…CAEIAGASSN (155 aa). The Proton donor; for dehydratase activity role is filled by aspartate 1189. The enoylreductase (ER) domain stretch occupies residues 1694 to 2006; it reads GMLGSVCLEP…TGKHLGKIAL (313 aa). The interval 2032 to 2210 is ketoreductase (KR) domain; that stretch reads GVYLLVGGLG…TTVDLGIMRD (179 aa). Residues 2318–2395 enclose the Carrier domain; the sequence is EASDSVLEAL…TFCNRIAAKS (78 aa). Serine 2355 bears the O-(pantetheine 4'-phosphoryl)serine mark.

It participates in secondary metabolite biosynthesis. Functionally, highly reducing polyketide synthase; part of the gene cluster that mediates the biosynthesis of the dimeric xanthones cryptosporioptides. The pathway begins with the synthesis of atrochrysone thioester by the polyketide synthase dmx-nrPKS. The atrochrysone carboxyl ACP thioesterase dmxR1 then breaks the thioester bond and releases the atrochrysone carboxylic acid from dmx-nrPKS. Atrochrysone carboxylic acid is decarboxylated by the decarboxylase dmxR15, and oxidized by the anthrone oxygenase dmxR16 to yield emodin. Emodin is then reduced to emodin hydroquinone by the oxidoreductase dmxR7. A-ring reduction by the short chain dehydrogenase dmxR18, dehydration by the scytalone dehydratase-like protein dmxR17 and probable spontaneous re-oxidation, results in overall deoxygenation to chrysophanol. Baeyer-Villiger oxidation by the Baeyer-Villiger monooxygenase (BVMO) dmxR6 then yields monodictylactone in equilibrium with monodictyphenone. In the case of the cryptosporioptides biosynthesis, monodictylactone is reduced at C-12 to an alcohol (by the short chain dehydrogenases dmxR12 or dmxR8) and hydroxylated at C-5 by dmxR9, yielding the electron-rich aromatic which could eliminate H(2)O to form the ortho-quinonemethide, followed by tautomerisation to paraquinone and complete the formal reduction to produce the 10-methylgroup. Conjugate addition of C-4a-OH to the resulting paraquinone by the monooxygenase dmxR10 then gives cyclohexadienone, which is then reduced at C-5 by the short chain dehydrogenase dmxR3 to give the dihydroxanthone. The 6,7-epoxide in the cryptosporioptides could be introduced by the cytochrome P450 monooxygenase dmxL3. The highly reducing PKS dmxL2 manufactures butyrate, which is further carboxylated by dmxL1 to form ethylmalonate. It is not yet clear whether the carboxylation occurs while the butyrate is attached to the ACP of dmxL2, but this unusual fungal metabolite could then be esterified to O-5 by the O-acetyltransferase dmxR13. Finally, dimerization performed by dmxR5 gives the observed dimers cryptosporioptides A, B and C as the final products of the pathway. The sequence is that of Highly reducing polyketide synthase dmxL2 from Cryptosporiopsis sp. (strain 8999).